The chain runs to 275 residues: Small ribosomal subunit protein uS3 (275 aa).

The KH type-2 domain occupies 38 to 106; it reads IRRMMTSGME…QVQLNILEVK (69 aa). Positions 216–228 are enriched in low complexity; that stretch reads NAAARAGNRPARG. A disordered region spans residues 216–275; that stretch reads NAAARAGNRPARGGADRPARGGRGGERGGRGRKPQQAPAAEAPKAEAPAAAPAESTGTEA. Over residues 229–244 the composition is skewed to basic and acidic residues; sequence GADRPARGGRGGERGG. Low complexity predominate over residues 249-268; sequence PQQAPAAEAPKAEAPAAAPA.

Belongs to the universal ribosomal protein uS3 family. In terms of assembly, part of the 30S ribosomal subunit. Forms a tight complex with proteins S10 and S14.

Functionally, binds the lower part of the 30S subunit head. Binds mRNA in the 70S ribosome, positioning it for translation. In Streptomyces avermitilis (strain ATCC 31267 / DSM 46492 / JCM 5070 / NBRC 14893 / NCIMB 12804 / NRRL 8165 / MA-4680), this protein is Small ribosomal subunit protein uS3.